A 356-amino-acid chain; its full sequence is Mannonate dehydratase (356 aa).

It belongs to the mannonate dehydratase family. It depends on Fe(2+) as a cofactor. Requires Mn(2+) as cofactor.

It catalyses the reaction D-mannonate = 2-dehydro-3-deoxy-D-gluconate + H2O. The protein operates within carbohydrate metabolism; pentose and glucuronate interconversion. Its function is as follows. Catalyzes the dehydration of D-mannonate. This chain is Mannonate dehydratase, found in Levilactobacillus brevis (strain ATCC 367 / BCRC 12310 / CIP 105137 / JCM 1170 / LMG 11437 / NCIMB 947 / NCTC 947) (Lactobacillus brevis).